Consider the following 89-residue polypeptide: Small ribosomal subunit protein uS15 (89 aa).

The protein belongs to the universal ribosomal protein uS15 family. Part of the 30S ribosomal subunit. Forms a bridge to the 50S subunit in the 70S ribosome, contacting the 23S rRNA.

In terms of biological role, one of the primary rRNA binding proteins, it binds directly to 16S rRNA where it helps nucleate assembly of the platform of the 30S subunit by binding and bridging several RNA helices of the 16S rRNA. Functionally, forms an intersubunit bridge (bridge B4) with the 23S rRNA of the 50S subunit in the ribosome. The polypeptide is Small ribosomal subunit protein uS15 (Azotobacter vinelandii (strain DJ / ATCC BAA-1303)).